An 879-amino-acid polypeptide reads, in one-letter code: Valine--tRNA ligase (879 aa).

Residues 45–55 (PNVTGKLHLGH) carry the 'HIGH' region motif. Residues 521–525 (KMSKS) carry the 'KMSKS' region motif. ATP is bound at residue lysine 524. Residues 806-879 (LTELVNVDEE…ERMKELKESK (74 aa)) are a coiled coil.

Belongs to the class-I aminoacyl-tRNA synthetase family. ValS type 1 subfamily. Monomer.

The protein resides in the cytoplasm. The enzyme catalyses tRNA(Val) + L-valine + ATP = L-valyl-tRNA(Val) + AMP + diphosphate. Functionally, catalyzes the attachment of valine to tRNA(Val). As ValRS can inadvertently accommodate and process structurally similar amino acids such as threonine, to avoid such errors, it has a 'posttransfer' editing activity that hydrolyzes mischarged Thr-tRNA(Val) in a tRNA-dependent manner. In Lactobacillus johnsonii (strain CNCM I-12250 / La1 / NCC 533), this protein is Valine--tRNA ligase.